The chain runs to 36 residues: Mating hormone A-factor 1 (36 aa).

Positions 1–21 are excised as a propeptide; the sequence is MQPSTATAAPKEKTSSEKKDN. Residue Cys-33 is modified to Cysteine methyl ester. A lipid anchor (S-farnesyl cysteine) is attached at Cys-33. Residues 34-36 constitute a propeptide, removed in mature form; sequence VIA.

The protein localises to the cell membrane. Functionally, the active factor is excreted into the culture medium by haploid cells of the A mating type and acts on cells of the opposite mating type (type alpha). It mediates the conjugation process between the two types by inhibiting the initiation of DNA synthesis in type alpha cells and synchronizing them with type A. The protein is Mating hormone A-factor 1 (MFA1) of Saccharomyces cerevisiae (strain ATCC 204508 / S288c) (Baker's yeast).